Here is a 209-residue protein sequence, read N- to C-terminus: Ribosomal RNA large subunit methyltransferase E (209 aa).

Positions 63, 65, 83, 99, and 124 each coordinate S-adenosyl-L-methionine. Lys164 acts as the Proton acceptor in catalysis.

The protein belongs to the class I-like SAM-binding methyltransferase superfamily. RNA methyltransferase RlmE family.

The protein localises to the cytoplasm. The catalysed reaction is uridine(2552) in 23S rRNA + S-adenosyl-L-methionine = 2'-O-methyluridine(2552) in 23S rRNA + S-adenosyl-L-homocysteine + H(+). Specifically methylates the uridine in position 2552 of 23S rRNA at the 2'-O position of the ribose in the fully assembled 50S ribosomal subunit. This chain is Ribosomal RNA large subunit methyltransferase E, found in Shewanella denitrificans (strain OS217 / ATCC BAA-1090 / DSM 15013).